The chain runs to 347 residues: MNPMRKNIAEMAGYVPGFQPRDEQNYTKLNTNENPYPPSPKVIEAILAEVGDNLRKYPDAASRAGCEEAGRLYGFDPDWVIMANGSDEVLNNLIRAFAGEGEEIAYVHPSYSYYSTLAEIQGAKVRTFLLDEGWALKDFPERYTGKLFFLTNPNAPLGFCYPQEFIEELAGRVDGMLVVDEAYADFAKENSLDLVRRLPNVVVTRTFSKSYSLAGMRLGLAIAHPEVIAALNKIRDHYNLDRLAQTACVAALADQEYFQQCVSKIRETRDWFSAELRVLDWDVIPSHGNFVFATPPDRNGKRVYDALFERRILVRYFSDPVLSHGLRISVGTREEMEKTLAALADIG.

Lysine 209 carries the N6-(pyridoxal phosphate)lysine modification.

This sequence belongs to the class-II pyridoxal-phosphate-dependent aminotransferase family. Histidinol-phosphate aminotransferase subfamily. In terms of assembly, homodimer. Pyridoxal 5'-phosphate is required as a cofactor.

It carries out the reaction L-histidinol phosphate + 2-oxoglutarate = 3-(imidazol-4-yl)-2-oxopropyl phosphate + L-glutamate. It participates in amino-acid biosynthesis; L-histidine biosynthesis; L-histidine from 5-phospho-alpha-D-ribose 1-diphosphate: step 7/9. The chain is Histidinol-phosphate aminotransferase from Syntrophotalea carbinolica (strain DSM 2380 / NBRC 103641 / GraBd1) (Pelobacter carbinolicus).